Consider the following 306-residue polypeptide: Tryptophan 2,3-dioxygenase (306 aa).

Residues 1 to 33 (MQPPGDDAAPRCPFAGAHAPDAPHVPEAAGDDA) form a disordered region. Substrate contacts are provided by residues 75-79 (FIIQH), tyrosine 137, and arginine 141. Position 264 (histidine 264) interacts with heme. Threonine 278 lines the substrate pocket.

It belongs to the tryptophan 2,3-dioxygenase family. As to quaternary structure, homotetramer. It depends on heme as a cofactor.

The enzyme catalyses L-tryptophan + O2 = N-formyl-L-kynurenine. It functions in the pathway amino-acid degradation; L-tryptophan degradation via kynurenine pathway; L-kynurenine from L-tryptophan: step 1/2. Heme-dependent dioxygenase that catalyzes the oxidative cleavage of the L-tryptophan (L-Trp) pyrrole ring and converts L-tryptophan to N-formyl-L-kynurenine. Catalyzes the oxidative cleavage of the indole moiety. This Burkholderia pseudomallei (strain 668) protein is Tryptophan 2,3-dioxygenase.